Here is a 344-residue protein sequence, read N- to C-terminus: Probable aldo-keto reductase 1 (344 aa).

Tyr-63 (proton donor) is an active-site residue. A substrate-binding site is contributed by His-130. 209–219 lines the NADP(+) pocket; the sequence is SPLGLGFFAAG.

It belongs to the aldo/keto reductase family.

The chain is Probable aldo-keto reductase 1 from Arabidopsis thaliana (Mouse-ear cress).